Here is a 200-residue protein sequence, read N- to C-terminus: Ras-related protein Rab-10 (200 aa).

Ser18, Gly19, Val20, Gly21, Lys22, Thr23, Cys24, Asn35, Thr36, Ser40, and Thr41 together coordinate GTP. Thr23 provides a ligand contact to Mg(2+). 2 consecutive short sequence motifs (switch) follow at residues 32 to 46 (DAFNTTFISTIGIDF) and 64 to 81 (DTAGQERFHTITTSYYRG). Mg(2+) contacts are provided by Thr41 and Asp64. 8 residues coordinate GTP: Gly67, Asn122, Lys123, Asp125, Met126, Ser152, Ala153, and Lys154. The tract at residues 181–200 (RENVDISTTGGGTGLKKCCS) is disordered. 2 S-geranylgeranyl cysteine lipidation sites follow: Cys198 and Cys199.

The protein belongs to the small GTPase superfamily. Rab family. Mg(2+) is required as a cofactor.

The protein localises to the cytoplasmic vesicle membrane. Its subcellular location is the golgi apparatus. It is found in the trans-Golgi network membrane. It localises to the endosome membrane. The protein resides in the recycling endosome membrane. The protein localises to the cytoplasmic vesicle. Its subcellular location is the phagosome membrane. It is found in the cell projection. It localises to the cilium. The protein resides in the endoplasmic reticulum membrane. It catalyses the reaction GTP + H2O = GDP + phosphate + H(+). Regulated by guanine nucleotide exchange factors (GEFs) which promote the exchange of bound GDP for free GTP. Regulated by GTPase activating proteins (GAPs) which increase the GTP hydrolysis activity. Inhibited by GDP dissociation inhibitors (GDIs) which prevent Rab-GDP dissociation. The small GTPases Rab are key regulators of intracellular membrane trafficking, from the formation of transport vesicles to their fusion with membranes. Rabs cycle between an inactive GDP-bound form and an active GTP-bound form that is able to recruit to membranes different set of downstream effectors directly responsible for vesicle formation, movement, tethering and fusion. That Rab is mainly involved in the biosynthetic transport of proteins from the Golgi to the plasma membrane. Also plays a specific role in asymmetric protein transport to the plasma membrane within the polarized neuron and epithelial cells. In neurons, it is involved in axonogenesis through regulation of vesicular membrane trafficking toward the axonal plasma membrane while in epithelial cells, it regulates transport from the Golgi to the basolateral membrane. Moreover, may play a role in the basolateral recycling pathway and in phagosome maturation. Finally, may play a role in endoplasmic reticulum dynamics and morphology controlling tubulation along microtubules and tubules fusion. May participate in the export of neosynthesized proteins through a Rab-dependent endosomal export route. The chain is Ras-related protein Rab-10 from Diplobatis ommata (Ocellated electric ray).